Here is a 488-residue protein sequence, read N- to C-terminus: Aspartyl/glutamyl-tRNA(Asn/Gln) amidotransferase subunit B (488 aa).

The protein belongs to the GatB/GatE family. GatB subfamily. Heterotrimer of A, B and C subunits.

The catalysed reaction is L-glutamyl-tRNA(Gln) + L-glutamine + ATP + H2O = L-glutaminyl-tRNA(Gln) + L-glutamate + ADP + phosphate + H(+). It catalyses the reaction L-aspartyl-tRNA(Asn) + L-glutamine + ATP + H2O = L-asparaginyl-tRNA(Asn) + L-glutamate + ADP + phosphate + 2 H(+). Functionally, allows the formation of correctly charged Asn-tRNA(Asn) or Gln-tRNA(Gln) through the transamidation of misacylated Asp-tRNA(Asn) or Glu-tRNA(Gln) in organisms which lack either or both of asparaginyl-tRNA or glutaminyl-tRNA synthetases. The reaction takes place in the presence of glutamine and ATP through an activated phospho-Asp-tRNA(Asn) or phospho-Glu-tRNA(Gln). The protein is Aspartyl/glutamyl-tRNA(Asn/Gln) amidotransferase subunit B of Chlamydia trachomatis serovar A (strain ATCC VR-571B / DSM 19440 / HAR-13).